Here is a 395-residue protein sequence, read N- to C-terminus: Ankyrin repeat domain-containing protein 65 (395 aa).

10 ANK repeats span residues 52-81 (QAWG…SVEE), 85-114 (AGRT…QVGA), 118-147 (AGRT…PANA), 151-180 (AGLT…PGPT), 185-212 (RGWT…GGAR), 213-241 (LDSV…PVDA), 245-274 (VGAT…DPSL), 278-307 (HGRS…EVDS), 311-340 (LGLT…EINA), and 344-373 (LHKT…SPTL).

The protein is Ankyrin repeat domain-containing protein 65 (ANKRD65) of Bos taurus (Bovine).